A 25-amino-acid chain; its full sequence is Large ribosomal subunit protein uL30 (25 aa).

It belongs to the universal ribosomal protein uL30 family. As to quaternary structure, part of the 50S ribosomal subunit.

The polypeptide is Large ribosomal subunit protein uL30 (rpmD) (Pseudomonas fluorescens biotype A).